The primary structure comprises 791 residues: Nuclear cap-binding protein subunit 1-A (791 aa).

The segment at 1 to 24 is disordered; sequence MSRRRHSDENDGGQAHKRRKTSEP. Residues 28–240 form the MIF4G domain; the sequence is EDRLESLICR…CLWAQIQKLK (213 aa). Residues 641 to 714 adopt a coiled-coil conformation; it reads LHSTIRKMNK…SEQKNLFLVI (74 aa). The interval 664-687 is disordered; it reads QRLAKQHKHRDSDDNDEDSGRKDG.

This sequence belongs to the NCBP1 family. In terms of assembly, component of the nuclear cap-binding complex (CBC), a heterodimer composed of ncbp1/cbp80 and ncbp2/cbp20 that interacts with m7GpppG-capped RNA. Component of an alternative nuclear cap-binding complex (CBC) composed of ncbp1/cbp80 and ncbp3.

The protein localises to the nucleus. The protein resides in the cytoplasm. In terms of biological role, component of the cap-binding complex (CBC), which binds cotranscriptionally to the 5'-cap of pre-mRNAs and is involved in various processes such as pre-mRNA splicing, translation regulation, nonsense-mediated mRNA decay, RNA-mediated gene silencing (RNAi) by microRNAs (miRNAs) and mRNA export. The CBC complex is involved in mRNA export from the nucleus, leading to the recruitment of the mRNA export machinery to the 5'-end of mRNA and to mRNA export in a 5' to 3' direction through the nuclear pore. The CBC complex is also involved in mediating U snRNA and intronless mRNAs export from the nucleus. The CBC complex is essential for a pioneer round of mRNA translation, before steady state translation when the CBC complex is replaced by cytoplasmic cap-binding protein eIF4E. The pioneer round of mRNA translation mediated by the CBC complex plays a central role in nonsense-mediated mRNA decay (NMD), NMD only taking place in mRNAs bound to the CBC complex, but not on eIF4E-bound mRNAs. The CBC complex enhances NMD in mRNAs containing at least one exon-junction complex (EJC), promoting the interaction between UPF1 and UPF2. The CBC complex is also involved in 'failsafe' NMD, which is independent of the EJC complex, while it does not participate in Staufen-mediated mRNA decay (SMD). During cell proliferation, the CBC complex is also involved in microRNAs (miRNAs) biogenesis via its interaction with SRRT/ARS2 and is required for miRNA-mediated RNA interference. The CBC complex also acts as a negative regulator of parn, thereby acting as an inhibitor of mRNA deadenylation. In the CBC complex, NCBP1/CBP80 does not bind directly capped RNAs (m7GpppG-capped RNA) but is required to stabilize the movement of the N-terminal loop of NCBP2/CBP20 and lock the CBC into a high affinity cap-binding state with the cap structure. Associates with NCBP3 to form an alternative cap-binding complex (CBC) which plays a key role in mRNA export. The conventional CBC with NCBP2 binds both small nuclear RNA (snRNA) and messenger (mRNA) and is involved in their export from the nucleus whereas the alternative CBC with NCBP3 does not bind snRNA and associates only with mRNA thereby playing a role only in mRNA export. The chain is Nuclear cap-binding protein subunit 1-A (ncbp1-a) from Xenopus laevis (African clawed frog).